Consider the following 266-residue polypeptide: Shikimate dehydrogenase (NADP(+)) (266 aa).

Residues 14 to 16 (SLS) and T61 contribute to the shikimate site. The active-site Proton acceptor is the K65. 2 residues coordinate shikimate: N85 and D100. Residues 124–128 (GAGGA) and A210 each bind NADP(+). Y212 is a shikimate binding site. Residue G233 coordinates NADP(+).

Belongs to the shikimate dehydrogenase family. In terms of assembly, homodimer.

The enzyme catalyses shikimate + NADP(+) = 3-dehydroshikimate + NADPH + H(+). It functions in the pathway metabolic intermediate biosynthesis; chorismate biosynthesis; chorismate from D-erythrose 4-phosphate and phosphoenolpyruvate: step 4/7. In terms of biological role, involved in the biosynthesis of the chorismate, which leads to the biosynthesis of aromatic amino acids. Catalyzes the reversible NADPH linked reduction of 3-dehydroshikimate (DHSA) to yield shikimate (SA). The polypeptide is Shikimate dehydrogenase (NADP(+)) (Halobacterium salinarum (strain ATCC 29341 / DSM 671 / R1)).